Here is a 741-residue protein sequence, read N- to C-terminus: Cellulose 1,4-beta-cellobiosidase (reducing end) CelS (741 aa).

The signal sequence occupies residues 1 to 27 (MVKSRKISILLAVAMLVSIMIPTTAFA). Substrate is bound at residue glutamate 76. Glutamate 87 functions as the Proton donor in the catalytic mechanism. Substrate is bound by residues threonine 140, asparagine 204, aspartate 241, glutamine 247, and 251-252 (TN). Residue aspartate 255 is the Nucleophile of the active site. Residues 301 to 302 (KY), 326 to 327 (WY), tyrosine 421, aspartate 520, and 645 to 646 (WH) each bind substrate. One can recognise a Dockerin domain in the interval 673-739 (STKLYGDVND…ILKEIDTLPY (67 aa)). Ca(2+) is bound by residues aspartate 679, asparagine 681, aspartate 683, glycine 684, lysine 685, aspartate 690, aspartate 711, leucine 712, asparagine 713, aspartate 715, arginine 717, and aspartate 722.

It belongs to the glycosyl hydrolase 48 (cellulase L) family.

Its subcellular location is the secreted. It carries out the reaction Hydrolysis of (1-&gt;4)-beta-D-glucosidic linkages in cellulose and similar substrates, releasing cellobiose from the reducing ends of the chains.. Inhibited by cellobiose and lactose, but not by glucose. This enzyme catalyzes the exohydrolysis of 1,4-beta-glucosidic linkages in cellulose with a preference for amorphous or crystalline cellulose over carboxymethyl cellulose. In Acetivibrio thermocellus (strain ATCC 27405 / DSM 1237 / JCM 9322 / NBRC 103400 / NCIMB 10682 / NRRL B-4536 / VPI 7372) (Clostridium thermocellum), this protein is Cellulose 1,4-beta-cellobiosidase (reducing end) CelS (celS).